The primary structure comprises 362 residues: Somatostatin receptor type 5 (362 aa).

Over residues 1–10 (MEPLSLTSTP) the composition is skewed to polar residues. The disordered stretch occupies residues 1–24 (MEPLSLTSTPSWNASAASSSSHNW). Residues 1-35 (MEPLSLTSTPSWNASAASSSSHNWSLVDPVSPMGA) lie on the Extracellular side of the membrane. Low complexity predominate over residues 11–24 (SWNASAASSSSHNW). 2 N-linked (GlcNAc...) asparagine glycosylation sites follow: N13 and N23. Residues 36-63 (RAVLVPVLYLLVCTVGLGGNTLVIYVVL) traverse the membrane as a helical segment. Topologically, residues 64-73 (RYAKMKTVTN) are cytoplasmic. Residues 74–99 (VYILNLAVADVLFMLGLPFLATQNAV) form a helical membrane-spanning segment. The Extracellular segment spans residues 100 to 110 (SYWPFGSFLCR). C109 and C184 are oxidised to a cystine. The helical transmembrane segment at 111–132 (LVMTLDGINQFTSIFCLMVMSV) threads the bilayer. Topologically, residues 133-154 (DRYLAVVHPLRSARWRRPRVAK) are cytoplasmic. The helical transmembrane segment at 155–175 (LASAAVWVFSLLMSLPLLVFA) threads the bilayer. The Extracellular portion of the chain corresponds to 176 to 195 (DVQEGWGTCNLSWPEPVGLW). A glycan (N-linked (GlcNAc...) asparagine) is linked at N185. Residues 196–220 (GAAFITYTSVLGFFGPLLVICLCYL) traverse the membrane as a helical segment. Residues 221-246 (LIVVKVKAAGMRVGSSRRRRSERKVT) are Cytoplasmic-facing. Residues 247 to 272 (RMVVVVVLVFVGCWLPFFIVNIVNLA) traverse the membrane as a helical segment. Residues 273 to 282 (FTLPEEPTSA) are Extracellular-facing. A helical transmembrane segment spans residues 283 to 307 (GLYFFVVVLSYANSCANPLLYGFLS). Topologically, residues 308-362 (DNFRQSFRKALCLRRGYGVEDADAIEPRPDKSGRPQTTLPTRSCEANGLMQTSRL) are cytoplasmic. C319 carries the S-palmitoyl cysteine; by ZDHHC5 lipid modification. The interval 330 to 362 (DAIEPRPDKSGRPQTTLPTRSCEANGLMQTSRL) is disordered.

Belongs to the G-protein coupled receptor 1 family. Heterodimer with SSTR2. Heterodimerization with SSTR2 increases cell growth inhibition activity of SSTR2. Post-translationally, palmitoylated at Cys-319 by ZDHHC5, but not ZDHHC8. Palmitoylation creates an additional intracellular loop which is thought to be important for efficient coupling to G-proteins and may target the protein to lipid rafts. As to expression, expressed in adult brain but not in liver, heart, spleen, or kidney.

It localises to the cell membrane. In terms of biological role, receptor for somatostatin-28. The activity of this receptor is mediated by G proteins which inhibit adenylyl cyclase. Increases cell growth inhibition activity of SSTR2 following heterodimerization. This Mus musculus (Mouse) protein is Somatostatin receptor type 5 (Sstr5).